The chain runs to 941 residues: Bifunctional glutamine synthetase adenylyltransferase/adenylyl-removing enzyme (941 aa).

Residues 1-431 (MSSAPPFAAA…TFRNAFRLAG (431 aa)) form an adenylyl removase region. The adenylyl transferase stretch occupies residues 447 to 941 (NGHGMRPHAG…DGTIAQAEVK (495 aa)).

Belongs to the GlnE family. Mg(2+) is required as a cofactor.

The catalysed reaction is [glutamine synthetase]-O(4)-(5'-adenylyl)-L-tyrosine + phosphate = [glutamine synthetase]-L-tyrosine + ADP. The enzyme catalyses [glutamine synthetase]-L-tyrosine + ATP = [glutamine synthetase]-O(4)-(5'-adenylyl)-L-tyrosine + diphosphate. Involved in the regulation of glutamine synthetase GlnA, a key enzyme in the process to assimilate ammonia. When cellular nitrogen levels are high, the C-terminal adenylyl transferase (AT) inactivates GlnA by covalent transfer of an adenylyl group from ATP to specific tyrosine residue of GlnA, thus reducing its activity. Conversely, when nitrogen levels are low, the N-terminal adenylyl removase (AR) activates GlnA by removing the adenylyl group by phosphorolysis, increasing its activity. The regulatory region of GlnE binds the signal transduction protein PII (GlnB) which indicates the nitrogen status of the cell. This chain is Bifunctional glutamine synthetase adenylyltransferase/adenylyl-removing enzyme, found in Bordetella bronchiseptica (strain ATCC BAA-588 / NCTC 13252 / RB50) (Alcaligenes bronchisepticus).